The following is a 284-amino-acid chain: Cell division protein FtsQ (284 aa).

The Cytoplasmic portion of the chain corresponds to 1 to 31 (MAQLPASMRRKRAAITSIHDKPPTRKQKLAN). The helical transmembrane segment at 32 to 52 (AGGWVLLVIAFVVLAVGIYGL) threads the bilayer. Residues 53–284 (YKVITDATVA…SIAGGTKAKP (232 aa)) are Periplasmic-facing. A POTRA domain is found at 59 to 128 (ATVAKLEVVG…NGIRVRVMPR (70 aa)).

It belongs to the FtsQ/DivIB family. FtsQ subfamily. Part of a complex composed of FtsB, FtsL and FtsQ.

The protein resides in the cell inner membrane. Its function is as follows. Essential cell division protein. May link together the upstream cell division proteins, which are predominantly cytoplasmic, with the downstream cell division proteins, which are predominantly periplasmic. May control correct divisome assembly. The polypeptide is Cell division protein FtsQ (Acinetobacter oleivorans (strain JCM 16667 / KCTC 23045 / DR1)).